A 412-amino-acid polypeptide reads, in one-letter code: MKKQIIERLTRYVKIDTQSNPDSKTTPSTNKQWDLLNLLEEELQSLGLKTDMDEHGYLFATLESNINYNVPTVGFLAHVDTSPDFNASHVNPQIIEAYNGQPIKLGESQRILDPDVFPELNKVVGHTLMVTDGTSLLGADDKAGVVEIMEGIKYLIDHPDIKHGTIRVGFTPDEEIGRGPHQFDVSRFNADFAYTMDGSQLGELQFESFNAAEVTVTCHGVNVHPGSAKNAMVNAISLGQQFNSLLPSHEVPERTEGYEGFYHLMNFTGNVEKATLQYIIRDHDKEQFELRKKRMMEIRDDINVHYNHFPIKVDVHDQYFNMAEKIEPLKHIIDIPKRVFEALDIVPNTEPIRGGTDGSQLSFMGLPTPNIFTGCGNFHGPFEYASIDVMEKAVHVVVGIAQEVANSHQSYK.

A Zn(2+)-binding site is contributed by histidine 78. Aspartate 80 is a catalytic residue. Aspartate 140 is a binding site for Zn(2+). Glutamate 174 acts as the Proton acceptor in catalysis. Residues glutamate 175, aspartate 197, and histidine 379 each coordinate Zn(2+).

It belongs to the peptidase M20B family. Zn(2+) is required as a cofactor.

It localises to the cytoplasm. It catalyses the reaction Release of the N-terminal residue from a tripeptide.. Its function is as follows. Cleaves the N-terminal amino acid of tripeptides. This Staphylococcus epidermidis (strain ATCC 12228 / FDA PCI 1200) protein is Peptidase T.